A 352-amino-acid polypeptide reads, in one-letter code: C-C chemokine receptor type 5 (352 aa).

The Extracellular segment spans residues 1-30 (MVYQVSSPTYDIDYYTSEPCQKINVKQIAA). Tyr3 is modified (sulfotyrosine). O-linked (GalNAc...) serine glycosylation is found at Ser6 and Ser7. Residues Tyr10, Tyr14, and Tyr15 each carry the sulfotyrosine modification. 2 cysteine pairs are disulfide-bonded: Cys20–Cys269 and Cys101–Cys178. Residues 31 to 58 (RLLPPLYSLVFIFGFVGNILVVLILINC) form a helical membrane-spanning segment. Residues 59-68 (KRLKSMTDIY) lie on the Cytoplasmic side of the membrane. The helical transmembrane segment at 69 to 89 (LLNLAISDLLFLLTIPFWAHY) threads the bilayer. Residues 90 to 102 (AAAQWDFGNTMCQ) lie on the Extracellular side of the membrane. A helical transmembrane segment spans residues 103–124 (LLTGLYLIGFFSGIFFIILLTI). The Cytoplasmic portion of the chain corresponds to 125 to 141 (DRYLAIVHAVFALKART). The chain crosses the membrane as a helical span at residues 142–166 (VTFGLVTSVITWVVAVFASLPGIIF). At 167–198 (TRSQREGLHYTCSSHFPSSQYQFWKNFQTLKI) the chain is on the extracellular side. The chain crosses the membrane as a helical span at residues 199–218 (VILGLVLPLLVMVICYSGIL). Residues 219–235 (KTLLRCRNEKKRHRAVR) are Cytoplasmic-facing. The chain crosses the membrane as a helical span at residues 236–260 (LIFTIMIVYFLFWAPYNIVLLLNTF). Residues 261-277 (QEFFGLNNCSSSNRLDQ) are Extracellular-facing. Residues 278-301 (AMQVTETLGMTHCCINPIIYAFVG) traverse the membrane as a helical segment. The Cytoplasmic portion of the chain corresponds to 302–352 (EKFRNYLLVFFQKHLAKRFCKCCSISQQEAPERASSVYTRSTGEQETTVGL). 3 S-palmitoyl cysteine lipidation sites follow: Cys321, Cys323, and Cys324. A phosphoserine; by BARK1 mark is found at Ser336, Ser337, and Ser342.

It belongs to the G-protein coupled receptor 1 family. In terms of assembly, interacts with PRAF2. Efficient ligand binding to CCL3/MIP-1alpha and CCL4/MIP-1beta requires sulfation, O-glycosylation and sialic acid modifications. Glycosylation on Ser-6 is required for efficient binding of CCL4. Interacts with GRK2. Interacts with ARRB1 and ARRB2. Interacts with CNIH4. Interacts with S100A4; this interaction stimulates T-lymphocyte chemotaxis. In terms of processing, sulfated on at least 2 of the N-terminal tyrosines. Sulfation is required for efficient binding of the chemokines, CCL3 and CCL4. Palmitoylation in the C-terminal is important for cell surface expression. Post-translationally, phosphorylation on serine residues in the C-terminal is stimulated by binding CC chemokines especially by APO-RANTES. In terms of processing, O-glycosylated, but not N-glycosylated. Ser-6 appears to be the major site even if Ser-7 may be also O-glycosylated. Also sialylated glycans present which contribute to chemokine binding. Thr-16 and Ser-17 may also be glycosylated and, if so, with small moieties such as a T-antigen.

Its subcellular location is the cell membrane. Its function is as follows. Receptor for a number of inflammatory CC-chemokines including CCL3/MIP-1-alpha, CCL4/MIP-1-beta and RANTES and subsequently transduces a signal by increasing the intracellular calcium ion level. May play a role in the control of granulocytic lineage proliferation or differentiation. Participates in T-lymphocyte migration to the infection site by acting as a chemotactic receptor. This is C-C chemokine receptor type 5 (CCR5) from Allochrocebus solatus (Sun-tailed monkey).